Reading from the N-terminus, the 453-residue chain is Gamma-aminobutyric acid receptor subunit alpha-6 (453 aa).

The signal sequence occupies residues 1–19 (MLLLLPWLFSLLWIENAQA). Residues 20 to 243 (QLEDEGNFYS…FHLQRKMGYF (224 aa)) are Extracellular-facing. Asparagine 31 carries N-linked (GlcNAc...) asparagine glycosylation. Position 84 (arginine 84) interacts with 4-aminobutanoate. N-linked (GlcNAc...) asparagine glycosylation is found at asparagine 128 and asparagine 141. Residue threonine 147 participates in 4-aminobutanoate binding. Cysteine 156 and cysteine 170 form a disulfide bridge. A helical membrane pass occupies residues 244–264 (MIQIYTPCIMTVILSQVSFWI). Residues 265–270 (NKESVP) are Cytoplasmic-facing. The helical transmembrane segment at 271 to 290 (ARTVFGITTVLTMTTLSISA) threads the bilayer. Residues 291–304 (RHSLPKVSYATAMD) lie on the Extracellular side of the membrane. A helical transmembrane segment spans residues 305 to 325 (WFIAVCFAFVFSALIEFAAVN). Residues 326–422 (YFTNLQSQKA…GTSKIDQYSR (97 aa)) are Cytoplasmic-facing. Serine 375 carries the phosphoserine modification. Phosphothreonine is present on threonine 403. Residues 423–443 (ILFPVAFAGFNLVYWIVYLSK) form a helical membrane-spanning segment. Topologically, residues 444 to 453 (DTMEVSSTVE) are extracellular.

The protein belongs to the ligand-gated ion channel (TC 1.A.9) family. Gamma-aminobutyric acid receptor (TC 1.A.9.5) subfamily. GABRA6 sub-subfamily. In terms of assembly, heteropentamer, formed by a combination of alpha (GABRA1-6), beta (GABRB1-3), gamma (GABRG1-3), delta (GABRD), epsilon (GABRE), rho (GABRR1-3), pi (GABRP) and theta (GABRQ) chains, each subunit exhibiting distinct physiological and pharmacological properties. Binds UBQLN1. Expressed in brain, in cerebellar granule cells.

The protein localises to the postsynaptic cell membrane. It localises to the cell membrane. It carries out the reaction chloride(in) = chloride(out). Functionally, alpha subunit of the heteropentameric ligand-gated chloride channel gated by gamma-aminobutyric acid (GABA), a major inhibitory neurotransmitter in the brain. GABA-gated chloride channels, also named GABA(A) receptors (GABAAR), consist of five subunits arranged around a central pore and contain GABA active binding site(s) located at the alpha and beta subunit interface(s). When activated by GABA, GABAARs selectively allow the flow of chloride anions across the cell membrane down their electrochemical gradient. Alpha-6/GABRA6 subunits are found at both synaptic and extrasynaptic sites. Chloride influx into the postsynaptic neuron following GABAAR opening decreases the neuron ability to generate a new action potential, thereby reducing nerve transmission. Extrasynaptic alpha-6-containing receptors contribute to the tonic GABAergic inhibition. Alpha-6 subunits are also present on glutamatergic synapses. The polypeptide is Gamma-aminobutyric acid receptor subunit alpha-6 (Rattus norvegicus (Rat)).